The following is a 275-amino-acid chain: Large ribosomal subunit protein uL2 (275 aa).

The segment at 223–260 is disordered; the sequence is VAMNPVDHPHGGGEGRTSGGRHPVSPWGLPTKGYKTRS.

This sequence belongs to the universal ribosomal protein uL2 family. Part of the 50S ribosomal subunit. Forms a bridge to the 30S subunit in the 70S ribosome.

Functionally, one of the primary rRNA binding proteins. Required for association of the 30S and 50S subunits to form the 70S ribosome, for tRNA binding and peptide bond formation. It has been suggested to have peptidyltransferase activity; this is somewhat controversial. Makes several contacts with the 16S rRNA in the 70S ribosome. The polypeptide is Large ribosomal subunit protein uL2 (Legionella pneumophila (strain Lens)).